A 118-amino-acid polypeptide reads, in one-letter code: Large ribosomal subunit protein bL20 (118 aa).

This sequence belongs to the bacterial ribosomal protein bL20 family.

Functionally, binds directly to 23S ribosomal RNA and is necessary for the in vitro assembly process of the 50S ribosomal subunit. It is not involved in the protein synthesizing functions of that subunit. This chain is Large ribosomal subunit protein bL20, found in Ectopseudomonas mendocina (strain ymp) (Pseudomonas mendocina).